A 1706-amino-acid polypeptide reads, in one-letter code: 5'-3' exoribonuclease 1 (1706 aa).

Position 1348 is a phosphoserine (S1348). Residues 1619-1706 are disordered; that stretch reads ENKEAQSSQA…VNFGVSKPSE (88 aa). Residues 1623–1642 show a composition bias toward polar residues; that stretch reads AQSSQATPVQTSQPDSSNIV. S1645 carries the post-translational modification Phosphoserine. Residues 1647–1657 show a composition bias toward low complexity; it reads RESSSASLKSS. A compositionally biased stretch (polar residues) spans 1658-1676; it reads PIAQPASSFQVETASQGHS. Positions 1677 to 1694 are enriched in basic residues; it reads ISHHKSTPISSSRRKSRK.

Belongs to the 5'-3' exonuclease family. In terms of assembly, found in a mRNP complex with UPF1, UPF2, UPF3B and XRN1. Associates with alpha and beta tubulins. Interacts with DIS3L2. Interacts with ZC3HAV1 in an RNA-dependent manner. Interacts with ZFP36L1. Interacts with TRIM71 (via NHL repeats) in an RNA-dependent manner. Interacts with YTHDC2 (via ANK repeats). Interacts with DHX34; the interaction is RNA-independent. Expressed in heart, brain, pancreas, spleen, testis, osteogenic sarcoma (OGS) biopsy and primary cell lines.

The protein resides in the cytoplasm. Functionally, major 5'-3' exoribonuclease involved in mRNA decay. Required for the 5'-3'-processing of the G4 tetraplex-containing DNA and RNA substrates. The kinetic of hydrolysis is faster for G4 RNA tetraplex than for G4 DNA tetraplex and monomeric RNA tetraplex. Binds to RNA and DNA. Plays a role in replication-dependent histone mRNA degradation. May act as a tumor suppressor protein in osteogenic sarcoma (OGS). This Homo sapiens (Human) protein is 5'-3' exoribonuclease 1.